Consider the following 971-residue polypeptide: MYRAGAVLLRGATRTRLLAAASAHQSFATFSQRNQSILMMKSMELAGNSGERRFYSTHDDPIAVDDSLELYKDLGGMSPIQVPADMPNVPMLAINRYPLFPGFIKKVDIVKDDNLKALIRRQLSLKQPYAGVFVKRDDENKEETITSLSEVYPTGSFVQIIEVRDQGSVLELVLSAHRRIRALEPIDEITPKNETPLNGRRARGKRAASATSPLTPPPSPPPLAPSVASVAPEISATEEKEEKTTPPSATGEKQKKGIIMVRTENVVAEPVPKNNETKATMMAIVQTIRDVVQFNQLFGQQINLLLHPSQNVIDNPVYLCDLVATLVQSAETKDLQEMMDEIDVSKRLKIALLLIQKEKAVAKLKYDINKDVEKKVQDHHRKYLLNEQLKVIKKELGIEKDEKTTIIEKIDERIKTLAVPEYALKVINEEKTKLQFLDPHSSEFSVTRNYLEWLTSVPWGLTSPENRRLSVAKKALDEGHYGMKDVKERIMEFIAVNLLRKSIGGKILCFHGPPGVGKTSIAKSIATALNREYFRFSVGGMTDVAEIKGHRRTYVGAMPGKMIQCMKKVKTENPLVLIDEVDKIGGAGFHGDPASALLELLDPEQNANFNDHFLDVPVDLSRVLFICTANEISKIPGPLRDRMEMIDVSGYLAEEKVEIAHQHLIPQLRKDTSLATEQLKIEDSALEELIKHYCRESGVRNLQQHIERIFRKAALQIAEQQNEDEEPAEKATTAITENSEAEPITSTSSADCLKSSAEQIVVCTENLQKFVGRPKFTSDRMYEVTPPGVIMGLAWTAMGGSALYIETVLKRPVDLTNDKDGSIETTGNLGDVMKESVRTALTVAKGILAREQPDNKFFDKAHIHIHVPEGATPKDGPSAGVTLVSSLLSLALDRPVVQDMAMTGEISLTGKVLPVGGIREKVIAARRVGAKRVFLPNENRRDFDDLPEFMKSELDIRFVSHYDELYEHLFQ.

A mitochondrion-targeting transit peptide spans 1 to 55; that stretch reads MYRAGAVLLRGATRTRLLAAASAHQSFATFSQRNQSILMMKSMELAGNSGERRFY. The region spanning 89–359 is the Lon N-terminal domain; that stretch reads VPMLAINRYP…IALLLIQKEK (271 aa). The segment at 190–255 is disordered; sequence TPKNETPLNG…PPSATGEKQK (66 aa). Positions 214–224 are enriched in pro residues; the sequence is LTPPPSPPPLA. 512 to 519 serves as a coordination point for ATP; sequence GPPGVGKT. The segment at 718–749 is disordered; the sequence is AEQQNEDEEPAEKATTAITENSEAEPITSTSS. Residues 733-749 show a composition bias toward polar residues; it reads TAITENSEAEPITSTSS. In terms of domain architecture, Lon proteolytic spans 784 to 971; it reads VTPPGVIMGL…YDELYEHLFQ (188 aa). Active-site residues include Ser-878 and Lys-921.

It belongs to the peptidase S16 family. As to quaternary structure, homohexamer or homoheptamer. Organized in a ring with a central cavity.

The protein localises to the mitochondrion matrix. It catalyses the reaction Hydrolysis of proteins in presence of ATP.. In terms of biological role, ATP-dependent serine protease that mediates the selective degradation of misfolded, unassembled or oxidatively damaged polypeptides as well as certain short-lived regulatory proteins in the mitochondrial matrix. May also have a chaperone function in the assembly of inner membrane protein complexes. Participates in the regulation of mitochondrial gene expression and in the maintenance of the integrity of the mitochondrial genome. Binds to mitochondrial DNA in a site-specific manner. Involved in the degradation of transcription factor atfs-1 in the mitochondrion. In Caenorhabditis elegans, this protein is Lon protease homolog, mitochondrial.